The chain runs to 311 residues: Putative dihydroorotate dehydrogenase A (fumarate) (311 aa).

Substrate is bound by residues Lys45, 69 to 73 (NSMGL), and Asn128. 45-46 (KT) provides a ligand contact to FMN. Asn128 contacts FMN. The active-site Nucleophile is the Cys131. Residues Lys165 and Val193 each contribute to the FMN site. A substrate-binding site is contributed by 194-195 (NS). Residues Gly220, 248 to 249 (GG), and 270 to 271 (GT) contribute to the FMN site.

This sequence belongs to the dihydroorotate dehydrogenase family. Type 1 subfamily. Homodimer. The cofactor is FMN.

The protein resides in the cytoplasm. It carries out the reaction (S)-dihydroorotate + fumarate = orotate + succinate. It functions in the pathway pyrimidine metabolism; UMP biosynthesis via de novo pathway. Its function is as follows. Catalyzes the conversion of dihydroorotate to orotate with fumarate as the electron acceptor. This is Putative dihydroorotate dehydrogenase A (fumarate) (pyrD) from Streptococcus pyogenes serotype M18 (strain MGAS8232).